Reading from the N-terminus, the 252-residue chain is Glycine-rich cell wall structural protein 1.0 (252 aa).

An N-terminal signal peptide occupies residues 1–30 (MATSKVLLSNVLFVFVCFGICSAARTLLTL). The segment at 231–252 (GSGYGGGGGSGEGGGHGGGYYP) is disordered.

Expressed in young hypocotyls.

The protein localises to the secreted. Its subcellular location is the cell wall. Its function is as follows. Responsible for plasticity of the cell wall. The sequence is that of Glycine-rich cell wall structural protein 1.0 from Phaseolus vulgaris (Kidney bean).